Consider the following 95-residue polypeptide: Small ubiquitin-related modifier 4 (95 aa).

One can recognise a Ubiquitin-like domain in the interval 17–95; it reads HINLKVAGQD…VFQQPTGGVY (79 aa). Gly-93 is covalently cross-linked (Glycyl lysine isopeptide (Gly-Lys) (interchain with K-? in acceptor proteins)). Positions 94-95 are excised as a propeptide; that stretch reads VY.

The protein belongs to the ubiquitin family. SUMO subfamily. In terms of assembly, interacts with SAE2. Covalently attached to a number of proteins. In terms of processing, in contrast to SUMO1, SUMO2 and SUMO3, seems to be insensitive to sentrin-specific proteases due to the presence of Pro-90. This may impair processing to mature form and conjugation to substrates. In terms of tissue distribution, expressed mainly in adult and embryonic kidney. Expressed at various levels in immune tissues, with the highest expression in the lymph node and spleen.

Ubiquitin-like protein which can be covalently attached to target lysines as a monomer. Does not seem to be involved in protein degradation and may modulate protein subcellular localization, stability or activity. Upon oxidative stress, conjugates to various anti-oxidant enzymes, chaperones, and stress defense proteins. May also conjugate to NFKBIA, TFAP2A and FOS, negatively regulating their transcriptional activity, and to NR3C1, positively regulating its transcriptional activity. Covalent attachment to its substrates requires prior activation by the E1 complex SAE1-SAE2 and linkage to the E2 enzyme UBE2I. The polypeptide is Small ubiquitin-related modifier 4 (SUMO4) (Homo sapiens (Human)).